The following is a 181-amino-acid chain: MASSMLSSAAVVTSPAQATMVAPFTGLKSSAAFPVTRKANNDITSIASNGGRVSCMKVWPPVGKKKFETLSYLPDLTEVELGKEVDYLLRNKWIPCVEFELEHGFVYREHGSTPGYYDGRYWTMWKLPLFGCTDSAQVLKEVQECKTEYPNAFIRIIGFDNNRQVQCISFIAYKPPSFTGA.

Residues 1-54 constitute a chloroplast transit peptide; it reads MASSMLSSAAVVTSPAQATMVAPFTGLKSSAAFPVTRKANNDITSIASNGGRVS.

This sequence belongs to the RuBisCO small chain family. As to quaternary structure, heterohexadecamer of 8 large and 8 small subunits.

The protein localises to the plastid. Its subcellular location is the chloroplast. Its function is as follows. RuBisCO catalyzes two reactions: the carboxylation of D-ribulose 1,5-bisphosphate, the primary event in carbon dioxide fixation, as well as the oxidative fragmentation of the pentose substrate. Both reactions occur simultaneously and in competition at the same active site. Although the small subunit is not catalytic it is essential for maximal activity. The polypeptide is Ribulose bisphosphate carboxylase small subunit, chloroplastic 2 (Brassica napus (Rape)).